The following is a 124-amino-acid chain: Apolipoprotein C-IV (124 aa).

Positions 1-27 are cleaved as a signal peptide; that stretch reads MSLLRCRQQTLPSLCLSVLFLACFVAS.

This sequence belongs to the apolipoprotein C4 family.

Its subcellular location is the secreted. May participate in lipoprotein metabolism. This Rattus norvegicus (Rat) protein is Apolipoprotein C-IV (Apoc4).